Consider the following 351-residue polypeptide: UPF0104 membrane protein MTH_887 (351 aa).

Transmembrane regions (helical) follow at residues 20-40, 51-71, 137-157, 165-185, 244-264, 275-295, 304-324, and 328-348; these read IVLS…FAGF, SPYF…LWTL, VFEF…IMTW, IVVS…VYAG, FVIG…RLYV, AVPL…PILP, ILVG…AASV, and IASY…YGKQ.

This sequence belongs to the UPF0104 family.

Its subcellular location is the cell membrane. This chain is UPF0104 membrane protein MTH_887, found in Methanothermobacter thermautotrophicus (strain ATCC 29096 / DSM 1053 / JCM 10044 / NBRC 100330 / Delta H) (Methanobacterium thermoautotrophicum).